Here is a 317-residue protein sequence, read N- to C-terminus: Melanocyte-stimulating hormone receptor (317 aa).

The Extracellular segment spans residues 1–37 (MPMQGAQRRLLGSLNSTPTATPNLGLAANHTGAPCLE). Asparagine 29 carries an N-linked (GlcNAc...) asparagine glycan. The chain crosses the membrane as a helical span at residues 38 to 63 (VSIPDGLFLSLGLVSLVENVLVVAAI). At 64–72 (AKNRNLHSP) the chain is on the cytoplasmic side. A helical transmembrane segment spans residues 73–93 (MYCFICCLALSDLLVSGSNML). Topologically, residues 94-118 (EMAVILLLEAGALATRASVVQQLQN) are extracellular. A helical transmembrane segment spans residues 119–140 (TIDVLTCSSMLCSLCFLGAIAV). Residues 141–163 (DRYVSIFYALRYHSIVTLPRARR) are Cytoplasmic-facing. Residues 164-183 (AIAAIWVASVLSSTLFIAYC) traverse the membrane as a helical segment. Residues 184–191 (DHAAVLLC) lie on the Extracellular side of the membrane. Residues 192–211 (LVVFFLAMLVLMAVLYVHML) form a helical membrane-spanning segment. Residues 212–240 (ARACQHAQGITRLHKRQLPAHQGFGLRGA) are Cytoplasmic-facing. The chain crosses the membrane as a helical span at residues 241 to 266 (ATLTILLGIFFVCWGPFFLHLMLVVL). Residues 267–279 (CPQHLTCSCIFKN) are Extracellular-facing. A helical transmembrane segment spans residues 280-300 (FKVFLTLIICNTIIDPLIYAF). The Cytoplasmic portion of the chain corresponds to 301-317 (RSQELCRTLKEVLLCSW). Cysteine 315 carries S-palmitoyl cysteine lipidation.

Belongs to the G-protein coupled receptor 1 family. In terms of assembly, interacts with MGRN1, but does not undergo MGRN1-mediated ubiquitination; this interaction competes with GNAS-binding and thus inhibits agonist-induced cAMP production. Interacts with OPN3; the interaction results in a decrease in MC1R-mediated cAMP signaling and ultimately a decrease in melanin production in melanocytes.

It is found in the cell membrane. Its function is as follows. Receptor for MSH (alpha, beta and gamma) and ACTH. The activity of this receptor is mediated by G proteins which activate adenylate cyclase. Mediates melanogenesis, the production of eumelanin (black/brown) and phaeomelanin (red/yellow), via regulation of cAMP signaling in melanocytes. The polypeptide is Melanocyte-stimulating hormone receptor (MC1R) (Alouatta sara (Bolivian red howler monkey)).